Here is a 173-residue protein sequence, read N- to C-terminus: Alpha-crystallin A chain (173 aa).

M1 bears the N-acetylmethionine mark. The interval 1-63 is required for complex formation with BFSP1 and BFSP2; that stretch reads MDIAIQHPWF…RTVLDSGISE (63 aa). Q6 is subject to Deamidated glutamine; partial. Phosphoserine is present on S45. Q50 carries the post-translational modification Deamidated glutamine; partial. Residues 52–162 form the sHSP domain; the sequence is LFRTVLDSGI…GHSERAIPVS (111 aa). Residues K70 and K99 each carry the N6-acetyllysine modification. H100 provides a ligand contact to Zn(2+). At N101 the chain carries Deamidated asparagine; partial. Residues E102 and H107 each coordinate Zn(2+). S122 is modified (phosphoserine). The residue at position 123 (N123) is a Deamidated asparagine; partial. Residues 144 to 173 form a disordered region; sequence PKVPSGVDAGHSERAIPVSREEKPSSAPSS. The span at 153-167 shows a compositional bias: basic and acidic residues; sequence GHSERAIPVSREEKP. H154 contacts Zn(2+). O-linked (GlcNAc) serine glycosylation occurs at S162.

This sequence belongs to the small heat shock protein (HSP20) family. As to quaternary structure, heteromer composed of three CRYAA and one CRYAB subunits. Inter-subunit bridging via zinc ions enhances stability, which is crucial as there is no protein turn over in the lens. Can also form homodimers and homotetramers (dimers of dimers) which serve as the building blocks of homooligomers. Within homooligomers, the zinc-binding motif is created from residues of 3 different molecules. His-100 and Glu-102 from one molecule are ligands of the zinc ion, and His-107 and His-154 residues from additional molecules complete the site with tetrahedral coordination geometry. Part of a complex required for lens intermediate filament formation composed of BFSP1, BFSP2 and CRYAA. In terms of processing, acetylation at Lys-70 may increase chaperone activity. Undergoes age-dependent proteolytical cleavage at the C-terminus.

It is found in the cytoplasm. The protein localises to the nucleus. Its function is as follows. Contributes to the transparency and refractive index of the lens. Acts as a chaperone, preventing aggregation of various proteins under a wide range of stress conditions. Required for the correct formation of lens intermediate filaments as part of a complex composed of BFSP1, BFSP2 and CRYAA. In Canis lupus familiaris (Dog), this protein is Alpha-crystallin A chain (CRYAA).